The primary structure comprises 164 residues: Cell division protein SepF (164 aa).

Residues 29–57 (INKGRGASQQEYDEYYEDSTPTVTQKEDP) form a disordered region.

Belongs to the SepF family. In terms of assembly, homodimer. Interacts with FtsZ.

Its subcellular location is the cytoplasm. Its function is as follows. Cell division protein that is part of the divisome complex and is recruited early to the Z-ring. Probably stimulates Z-ring formation, perhaps through the cross-linking of FtsZ protofilaments. Its function overlaps with FtsA. This Exiguobacterium sibiricum (strain DSM 17290 / CCUG 55495 / CIP 109462 / JCM 13490 / 255-15) protein is Cell division protein SepF.